A 251-amino-acid polypeptide reads, in one-letter code: MLQTMKTLTLIPTRLGSTRLPNKPLADICGKPMIVHVADRAAAAKLGRTVIATDSEEIFKVVAAHGHEAIMTRGDHESGSDRIYEALAKLDPSGEIDAVVNVQGDLPTIDPDTIRRALLPLEDGPADIATLGVEITVEEEKTNPNVVKIVGSPLAGNRRLRALYFTRATAPYGEGPLYHHIGLYAYRRSALERFVKLGPSPLEKREKLEQLRALEAGMRIDVEIVKTVPLGVDTQADLDRARTFCSQAGTI.

This sequence belongs to the KdsB family.

It localises to the cytoplasm. The catalysed reaction is 3-deoxy-alpha-D-manno-oct-2-ulosonate + CTP = CMP-3-deoxy-beta-D-manno-octulosonate + diphosphate. Its pathway is nucleotide-sugar biosynthesis; CMP-3-deoxy-D-manno-octulosonate biosynthesis; CMP-3-deoxy-D-manno-octulosonate from 3-deoxy-D-manno-octulosonate and CTP: step 1/1. It participates in bacterial outer membrane biogenesis; lipopolysaccharide biosynthesis. In terms of biological role, activates KDO (a required 8-carbon sugar) for incorporation into bacterial lipopolysaccharide in Gram-negative bacteria. The protein is 3-deoxy-manno-octulosonate cytidylyltransferase of Brucella canis (strain ATCC 23365 / NCTC 10854 / RM-666).